The chain runs to 1820 residues: Sodium channel protein (1820 aa).

The Cytoplasmic portion of the chain corresponds to 1–117 (MARKFSSARP…FNPIRRGAIR (117 aa)). An I repeat occupies 108–410 (FNPIRRGAIR…VAMAYEEQNQ (303 aa)). A helical transmembrane segment spans residues 118–138 (VFVNSAFNFFIMFTIFSNCIF). Residues 139–149 (MTISNPPAWSK) lie on the Extracellular side of the membrane. Residues 150-171 (IVEYTFTGIYTFEVIVKVLSRG) traverse the membrane as a helical segment. At 172 to 176 (FCIGH) the chain is on the cytoplasmic side. A helical transmembrane segment spans residues 177-197 (FTFLRDPWNWLDFSVVTMTYI). Over 198-203 (TEFIDL) the chain is Extracellular. Residues 204 to 224 (RNVSALRTFRVLRALKTITIF) traverse the membrane as a helical; Voltage-sensor segment. Residues 225–243 (PGLKTIVRALIESMKQMGD) are Cytoplasmic-facing. The helical transmembrane segment at 244-264 (VVILTVFSLAVFTLAGMQLFM) threads the bilayer. At 265-346 (GNLRHKCIRW…PNYGYTNYDN (82 aa)) the chain is on the extracellular side. C271 and C324 are joined by a disulfide. N-linked (GlcNAc...) asparagine glycans are attached at residues N278, N288, and N317. The interval 285 to 342 (SAYNTTFDFTAYIENEENQYFLDGALDALLCGNNSDAGKCPEGYTCMKAGRNPNYGYT) is non-homologous region of repeat I. An intramembrane region (pore-forming) is located at residues 347–371 (FAWTFLCLFRLMLQDYWENLYQMTL). The Extracellular segment spans residues 372 to 378 (RAAGKSY). A helical membrane pass occupies residues 379–402 (MVFFIMVIFLGSFYLINLILAVVA). Topologically, residues 403 to 557 (MAYEEQNQAT…CCGPWVFLKK (155 aa)) are cytoplasmic. The disordered stretch occupies residues 483–507 (SVKLSTEEQRSDSKSMDSKHSVDKP). Over residues 487–507 (STEEQRSDSKSMDSKHSVDKP) the composition is skewed to basic and acidic residues. One copy of the II repeat lies at 548–811 (CCGPWVFLKK…EEDDEVNSLQ (264 aa)). The chain crosses the membrane as a helical span at residues 558–578 (WVHFVMMDPFTDLFITLCIIL). Over 579–599 (NTLFMSIEHHPMNESFQSLLS) the chain is Extracellular. N591 carries an N-linked (GlcNAc...) asparagine glycan. A helical membrane pass occupies residues 600–620 (AGNLVFTTIFAAEMVLKIIAL). Topologically, residues 621-625 (DPYYY) are cytoplasmic. A helical membrane pass occupies residues 626–643 (FQQTWNIFDSIIVSLSLL). Over 644–650 (ELGLSNM) the chain is Extracellular. The chain crosses the membrane as a helical; Voltage-sensor span at residues 651–671 (QGMSVLRSLRLLRIFKLAKSW). At 672–690 (PTLNILIKIICNSVGALGN) the chain is on the cytoplasmic side. A helical membrane pass occupies residues 691–711 (LTIVLAIIVFIFALVGFQLFG). At 712-734 (KNYKEYVCKISDDCELPRWHMND) the chain is on the extracellular side. An intramembrane region (pore-forming) is located at residues 735–755 (FFHSFLIVFRALCGEWIETMW). The Extracellular segment spans residues 756–766 (DCMEVGGVPMC). C757 and C766 are joined by a disulfide. A helical membrane pass occupies residues 767-790 (LAVYMMVIIIGNLVMLNLFLALLL). Over 791-1004 (SSFSSDNLSS…TIVEHDYFET (214 aa)) the chain is Cytoplasmic. 2 disordered regions span residues 844 to 864 (PPSD…DTLP) and 891 to 959 (VKGE…SKDP). Residues 896–910 (EIEEEGLVDSSDEED) are compositionally biased toward acidic residues. A compositionally biased stretch (polar residues) spans 924–935 (SVCSTVDYSPSE). The segment covering 942-953 (EEEEEEEEEPEE) has biased composition (acidic residues). An III repeat occupies 988–1295 (NLRRTCYTIV…KKYYNAMKKL (308 aa)). Residues 1005-1025 (FIIFMILLSSGVLAFEDIYIW) form a helical membrane-spanning segment. Over 1026–1037 (RRRVIKVILEYA) the chain is Extracellular. A helical transmembrane segment spans residues 1038-1058 (DKVFTYVFIVEMLLKWVAYGF). Over 1059–1065 (KRYFTDA) the chain is Cytoplasmic. A helical transmembrane segment spans residues 1066-1086 (WCWLDFVIVGASIMGITSSLL). The Extracellular portion of the chain corresponds to 1087-1091 (GYEEL). Residues 1092–1112 (GAIKNLRTIRALRPLRALSRF) traverse the membrane as a helical; Voltage-sensor segment. Topologically, residues 1113-1131 (EGMKVVVRALLGAIPSIMN) are cytoplasmic. The helical transmembrane segment at 1132–1152 (VLLVCLMFWLIFSIMGVNLFA) threads the bilayer. Residues 1153–1199 (GKFYRCINTTTDEILPVEEVNNRSDCMALMYTNEVRWVNLKVNYDNA) lie on the Extracellular side of the membrane. N1160 and N1174 each carry an N-linked (GlcNAc...) asparagine glycan. The tract at residues 1172–1194 (VNNRSDCMALMYTNEVRWVNLKV) is non-homologous region of repeat III. Positions 1200-1221 (GMGYLSLLQVSTFKGWMDIMYA) form an intramembrane region, pore-forming. At 1222–1243 (AVDSREVEDQPIYEINVYMYLY) the chain is on the extracellular side. Residues 1244-1264 (FVIFIVFGAFFTLNLFIGVII) traverse the membrane as a helical segment. Topologically, residues 1265-1320 (DNFNRQKQKLGGEDLFMTEEQKKYYNAMKKLGSKKAAKCIPRPSNVVQGVVYDIVT) are cytoplasmic. The IV repeat unit spans residues 1304-1602 (IPRPSNVVQG…WHKFDVHGTQ (299 aa)). The helical transmembrane segment at 1321–1341 (QPFTDIFIMALICINMVAMMV) threads the bilayer. At 1342 to 1352 (ESEDQSQVKKD) the chain is on the extracellular side. The helical transmembrane segment at 1353–1376 (ILSQINVIFVIIFTVECLLKLLAL) threads the bilayer. At 1377-1380 (RQYF) the chain is on the cytoplasmic side. A helical transmembrane segment spans residues 1381 to 1398 (FTVGWNVFDFAVVVISII). Over 1399 to 1416 (GLLLSDIIEKYFVSPTLF) the chain is Extracellular. A helical; Voltage-sensor transmembrane segment spans residues 1417–1437 (RVIRLARIARVLRLIRAAKGI). Residues 1438 to 1453 (RTLLFALMMSLPALFN) are Cytoplasmic-facing. The chain crosses the membrane as a helical span at residues 1454–1474 (IGLLLFLIMFIFSIFGMSNFA). The Extracellular portion of the chain corresponds to 1475–1490 (YVKKQGGVDDIFNFET). Residues 1490–1505 (TFGNSMICLFEITTSA) are non-homologous region of repeat IV. The pore-forming intramembrane region spans 1491-1513 (FGNSMICLFEITTSAGWDGLLLP). Residues 1514 to 1543 (TLNTGPPDCDPDVENPGTDVRGNCGNPGKG) lie on the Extracellular side of the membrane. Residues 1544-1567 (ITFFCSYIILSFLVVVNMYIAIIL) traverse the membrane as a helical segment. Residues 1568–1820 (ENFGVAQEES…GAIVVRESIV (253 aa)) are Cytoplasmic-facing.

The protein belongs to the sodium channel (TC 1.A.1.10) family.

It is found in the cell membrane. Its function is as follows. Mediates the voltage-dependent sodium ion permeability of excitable membranes. Assuming opened or closed conformations in response to the voltage difference across the membrane, the protein forms a sodium-selective channel through which Na(+) ions may pass in accordance with their electrochemical gradient. The chain is Sodium channel protein from Electrophorus electricus (Electric eel).